A 724-amino-acid chain; its full sequence is Probable metal-nicotianamine transporter YSL13 (724 aa).

The segment at 1–54 (MATVPTPSEAHGGATPTAADVEMVEASELRRRGKPSGDRATGPSRDGAAAAAEE) is disordered. 14 helical membrane passes run 80-100 (AFVVSFFLVIMFSVIVMKLNL), 103-123 (GIIPSLNVSAGLLGFFFVRLW), 148-168 (CVVAGYDIAFSGGFGNYILSM), 190-210 (LGWIIGFLFLVSFIGLFGLVP), 252-272 (LGIFFILSFFWGFFQWFYTAT), 310-330 (IVNVSVLLGGILSWGIMWPLI), 355-375 (VFIAIALILGDGLYNFLKMII), 423-443 (IPWYVAYGGYAVVAAISIGTV), 455-475 (ILVAYIVAPILAFCNAYGTGL), 487-507 (LAIFAFGAWTGASHGGVLAGL), 541-561 (FVSQVIGTAMGCVIAPCVFWL), 603-623 (LNLCYAFFAAAIVVNLIRDLV), 640-660 (FYIGSYFAIDMFIGTVILFVW), and 675-695 (VASGMICGDGIWVLPQSVLAL).

This sequence belongs to the YSL (TC 2.A.67.2) family. Expressed in leaves and at low levels in root cortex.

It localises to the membrane. Its function is as follows. May be involved in the transport of nicotianamine-chelated metals. The sequence is that of Probable metal-nicotianamine transporter YSL13 (YSL13) from Oryza sativa subsp. japonica (Rice).